A 60-amino-acid chain; its full sequence is Myrmicitoxin(1)-Pr4b (60 aa).

A signal peptide spans 1–23 (MKAIIFLFAVLTVVAIIIPIISG). A propeptide spanning residues 24–33 (EPNAGPHAAS) is cleaved from the precursor. Residue glutamine 59 is modified to Glutamine amide.

Belongs to the formicidae venom clade 2 family. As to expression, expressed by the venom gland.

It is found in the secreted. Functionally, toxin that causes a rapid and irreversible paralysis when intrathoracically injected into insects (blowflies). Does not cause spontaneous nocifensive behaviors by intraplantar injection in mice. This Pogonomyrmex rugosus (Desert harvester ant) protein is Myrmicitoxin(1)-Pr4b.